A 268-amino-acid chain; its full sequence is MDNRPIGVMDSGLGGLSVVRVIQQKLPNEEVIFVGDQGHFPYGTKDQAEVRQLALSIGAFLLKHDVKMMVVACNTATAAALPALQAALPIPVIGVIEPGARAALAQDKKGPIGVIATTATTTAGAYPATIERLAPGTPVIAKATQPMVEIVEHGQTGTAKAQEVVSEQLMTFKEHPVKTLIMGCTHFPFLAPEISKAVGPTVALVDPAKETVATAKSWLEQHQAMGNHAHPNYHLYSTGNLPDLRAGVNKWLLSGHFDLGTAQIEEGD.

Residues 10–11 (DS) and 42–43 (YG) contribute to the substrate site. Catalysis depends on C73, which acts as the Proton donor/acceptor. Residue 74-75 (NT) coordinates substrate. The active-site Proton donor/acceptor is C184. Residue 185–186 (TH) participates in substrate binding.

This sequence belongs to the aspartate/glutamate racemases family.

It carries out the reaction L-glutamate = D-glutamate. The protein operates within cell wall biogenesis; peptidoglycan biosynthesis. Provides the (R)-glutamate required for cell wall biosynthesis. In Limosilactobacillus fermentum (strain NBRC 3956 / LMG 18251) (Lactobacillus fermentum), this protein is Glutamate racemase.